A 765-amino-acid chain; its full sequence is MAKNLKKGKKVFNKSTRKINRLKEEEELAKLQERINNYDPKTDEASVSQFSDLPITENTLKGLKEATFVSLTDIQKKTIPIALKGEDLMGTARTGSGKTLAFLIPVIESLIRNKITEYDGLAALIVSPTRELAVQIFEVLTKIGKYNTFSAGLVTGGKDVQFEKERVSRMNILVGTPGRISQHLNEAVGMETSNLQVLVLDEADRCLDMGFKKQIDNILGHLPTTRQTLLFSATQSESVNDLARLSLTNPNKIGVSSDQEVSATPESLEQYYVKVPLDEKLDVLWSFIKSHLKSKILVFFSSSKQVQYTYETFRTLQPGISLMKLYGRHKQTSRLETTMKFSQAQHACLFATDIVARGLDFPAIDWVVQVDCPEDAATYVHRVGRSARFGRKGKSLLMLLPSEEEGMLKRLKIHKIEPKLMNIKQKSKKSIRPQLQSLCFKDPVMKNLGQRAFIAYFKSVHIQKDKDVFKVEELPAESYAASLGLPGAPKIKIKGGESNKEKKNASRKLIALAKTDADGEVQTGNEKVRTKYDRMFERKNQTILSDHYLNMTGNKVNSDGESEDEDFMTVKRKDHELKEEELPDLTIPVSKRQAKKALSRKATLASKGNPTKLKFDDDGVAHAIYELEDEDDFIKAGDAKKQKEEFVNKERETMKISDITDKEVERQKRQEKKRKRKEIERRMREEEEEDFDNEQTVVTLGAPDLDRDLQYDNGSDVEEPVSKKPKWFEGGDDDKSKNTNDGFVEYDEPETLEDLESLTARLIGN.

A Q motif motif is present at residues Ser48–Lys76. Positions Ile79–Ile253 constitute a Helicase ATP-binding domain. Residue Ala92 to Thr99 coordinates ATP. The short motif at Asp201–Asp204 is the DEAD box element. In terms of domain architecture, Helicase C-terminal spans Ser267–Cys439. Composition is skewed to basic and acidic residues over residues Lys655–Lys668 and Pro720–Asn738. Residues Lys655–Asn765 are disordered. Residues Val744–Glu756 are compositionally biased toward acidic residues.

Belongs to the DEAD box helicase family. DDX10/DBP4 subfamily. As to quaternary structure, interacts with the U3 and U14 snoRNAs. Associates with pre-ribosomal complexes.

The protein localises to the nucleus. It localises to the nucleolus. It carries out the reaction ATP + H2O = ADP + phosphate + H(+). Its function is as follows. ATP-dependent RNA helicase required for ribosome biogenesis. Involved in the release of U14 snoRNA in pre-ribosomal complexes. Required for pre-rRNA cleavage at site A2. This is ATP-dependent RNA helicase DBP4 (DBP4) from Candida albicans (strain SC5314 / ATCC MYA-2876) (Yeast).